Here is a 365-residue protein sequence, read N- to C-terminus: Peptide chain release factor 2 (365 aa).

An N5-methylglutamine modification is found at Gln252.

Belongs to the prokaryotic/mitochondrial release factor family. In terms of processing, methylated by PrmC. Methylation increases the termination efficiency of RF2.

The protein localises to the cytoplasm. Peptide chain release factor 2 directs the termination of translation in response to the peptide chain termination codons UGA and UAA. This is Peptide chain release factor 2 from Escherichia coli O9:H4 (strain HS).